A 433-amino-acid polypeptide reads, in one-letter code: Dihydrolipoyllysine-residue acetyltransferase component of pyruvate dehydrogenase complex (433 aa).

The Lipoyl-binding domain maps to 2–77 (AFEFRLPDIG…VVGDVIVKID (76 aa)). N6-lipoyllysine is present on Lys-43. Disordered stretches follow at residues 80 to 134 (DAEE…PSVR) and 164 to 204 (YLNG…FPET). Basic and acidic residues-rich tracts occupy residues 84 to 103 (MQFKGHGDDEDSKKEEKEQE) and 117 to 126 (EKTEVDESKT). One can recognise a Peripheral subunit-binding (PSBD) domain in the interval 128-165 (KAMPSVRKYARENGVNIKAVNGSGKNGRITKEDIDAYL). The segment covering 166-188 (NGGSSEEGSNTSVASESTSSDVV) has biased composition (low complexity). Residue His-404 is part of the active site.

This sequence belongs to the 2-oxoacid dehydrogenase family. As to quaternary structure, forms a 24-polypeptide structural core with octahedral symmetry. Requires (R)-lipoate as cofactor.

The catalysed reaction is N(6)-[(R)-dihydrolipoyl]-L-lysyl-[protein] + acetyl-CoA = N(6)-[(R)-S(8)-acetyldihydrolipoyl]-L-lysyl-[protein] + CoA. In terms of biological role, the pyruvate dehydrogenase complex catalyzes the overall conversion of pyruvate to acetyl-CoA and CO(2). It contains multiple copies of three enzymatic components: pyruvate dehydrogenase (E1), dihydrolipoamide acetyltransferase (E2) and lipoamide dehydrogenase (E3). In Staphylococcus epidermidis (strain ATCC 12228 / FDA PCI 1200), this protein is Dihydrolipoyllysine-residue acetyltransferase component of pyruvate dehydrogenase complex (pdhC).